The primary structure comprises 166 residues: Phosphopantetheine adenylyltransferase (166 aa).

S8 contacts substrate. Residues 8 to 9 (SF) and H16 each bind ATP. Residues K40, T72, and R86 each coordinate substrate. Residues 87–89 (GLR), E97, and 122–128 (HSFLSSS) contribute to the ATP site.

It belongs to the bacterial CoaD family. Homohexamer. Requires Mg(2+) as cofactor.

Its subcellular location is the cytoplasm. The catalysed reaction is (R)-4'-phosphopantetheine + ATP + H(+) = 3'-dephospho-CoA + diphosphate. The protein operates within cofactor biosynthesis; coenzyme A biosynthesis; CoA from (R)-pantothenate: step 4/5. Reversibly transfers an adenylyl group from ATP to 4'-phosphopantetheine, yielding dephospho-CoA (dPCoA) and pyrophosphate. The polypeptide is Phosphopantetheine adenylyltransferase (Synechococcus sp. (strain RCC307)).